The sequence spans 121 residues: Small ribosomal subunit protein bS16 (121 aa).

The disordered stretch occupies residues 80-121 (AGVREKTERNNPNKAKPGKKAQERAEEKAAKAAEAAEAADAE). Basic and acidic residues-rich tracts occupy residues 81–90 (GVREKTERNN) and 99–110 (KAQERAEEKAAK).

This sequence belongs to the bacterial ribosomal protein bS16 family.

In Ruegeria sp. (strain TM1040) (Silicibacter sp.), this protein is Small ribosomal subunit protein bS16.